A 285-amino-acid chain; its full sequence is Probable endonuclease 4 (285 aa).

His-67, His-107, Glu-144, Asp-178, His-181, His-215, Asp-228, His-230, and Glu-260 together coordinate Zn(2+).

The protein belongs to the AP endonuclease 2 family. It depends on Zn(2+) as a cofactor.

It catalyses the reaction Endonucleolytic cleavage to 5'-phosphooligonucleotide end-products.. Its function is as follows. Endonuclease IV plays a role in DNA repair. It cleaves phosphodiester bonds at apurinic or apyrimidinic (AP) sites, generating a 3'-hydroxyl group and a 5'-terminal sugar phosphate. The sequence is that of Probable endonuclease 4 from Chloroflexus aurantiacus (strain ATCC 29366 / DSM 635 / J-10-fl).